Here is a 387-residue protein sequence, read N- to C-terminus: MTLDDAALKSFGFIERPTKNMINIDPLQTGGILTEDARRALVEWGDGYSICDNCGGVLDLIKKPPVQKFIHEALPEFLGVDEVRITHGARESKFAVMHAIAQEGDTVILDGLAHYSSVVAAQRARLEIRKVPHSEKPDYHIDPEAYGTAIEETISETGKAPALALLTYPDGNYGNLADAKKIASVCHEYDVPLLLNCAYSVGRMPVDAKELGVDFIAGSGHKSMASCGPIGVLGVNNDNGDYSDIIFRKSPTNKNKEIELLGCTARSATLMTMIASFPEVVKRTRNWGNEVADARWFSEKLETMGLIQMGQKPHNHDLMFFEAPNLYEISTRVKKGRYFLYKELKSRNIHGIKAGLTKFFKLSTFEVGRENLSYIVDSFDEIIKKYE.

Pyridoxal 5'-phosphate-binding positions include Ala-89–Arg-90, Asn-196, and Ser-219–His-221. Lys-222 is modified (N6-(pyridoxal phosphate)lysine).

Belongs to the SepCysS family. In terms of assembly, homodimer. Interacts with SepRS. Pyridoxal 5'-phosphate is required as a cofactor.

It catalyses the reaction O-phospho-L-seryl-tRNA(Cys) + hydrogen sulfide + H(+) = L-cysteinyl-tRNA(Cys) + phosphate. In terms of biological role, converts O-phospho-L-seryl-tRNA(Cys) (Sep-tRNA(Cys)) to L-cysteinyl-tRNA(Cys) (Cys-tRNA(Cys)). The polypeptide is O-phospho-L-seryl-tRNA:Cys-tRNA synthase 2 (Methanococcoides burtonii (strain DSM 6242 / NBRC 107633 / OCM 468 / ACE-M)).